The following is a 474-amino-acid chain: tRNA-2-methylthio-N(6)-dimethylallyladenosine synthase (474 aa).

One can recognise an MTTase N-terminal domain in the interval 3–120; that stretch reads KKLHIKTWGC…LPEMIEQIQQ (118 aa). [4Fe-4S] cluster contacts are provided by Cys-12, Cys-49, Cys-83, Cys-157, Cys-161, and Cys-164. The 233-residue stretch at 143–375 folds into the Radical SAM core domain; sequence RAEGPSAFVS…QDRITQQAMR (233 aa). The TRAM domain maps to 378 to 441; that stretch reads RQMLGTVQRI…TNSLRGKFIR (64 aa).

The protein belongs to the methylthiotransferase family. MiaB subfamily. In terms of assembly, monomer. [4Fe-4S] cluster serves as cofactor.

It localises to the cytoplasm. It catalyses the reaction N(6)-dimethylallyladenosine(37) in tRNA + (sulfur carrier)-SH + AH2 + 2 S-adenosyl-L-methionine = 2-methylsulfanyl-N(6)-dimethylallyladenosine(37) in tRNA + (sulfur carrier)-H + 5'-deoxyadenosine + L-methionine + A + S-adenosyl-L-homocysteine + 2 H(+). Its function is as follows. Catalyzes the methylthiolation of N6-(dimethylallyl)adenosine (i(6)A), leading to the formation of 2-methylthio-N6-(dimethylallyl)adenosine (ms(2)i(6)A) at position 37 in tRNAs that read codons beginning with uridine. The chain is tRNA-2-methylthio-N(6)-dimethylallyladenosine synthase from Shewanella loihica (strain ATCC BAA-1088 / PV-4).